The sequence spans 177 residues: Thymidine kinase (177 aa).

11 to 18 (GPMFSGKS) contacts ATP. Glu-83 (proton acceptor) is an active-site residue. Substrate is bound at residue Phe-113. Residues Cys-138 and Cys-141 each coordinate Zn(2+). Position 157 to 161 (157 to 161 (IEIIG)) interacts with substrate. Positions 170 and 173 each coordinate Zn(2+).

This sequence belongs to the thymidine kinase family. Homotetramer. Two molecules of substrate bind to each enzyme tetramer.

The catalysed reaction is thymidine + ATP = dTMP + ADP + H(+). Its function is as follows. Phosphorylates thymidine and thymidine analogs, such as azidothymidine (AZT). Part of the salvage pathway for pyrimidine deoxyribonucleotide synthesis. In Variola virus, this protein is Thymidine kinase (OPG101).